Here is a 286-residue protein sequence, read N- to C-terminus: Master replication protein (286 aa).

In terms of domain architecture, CRESS-DNA virus Rep endonuclease spans 2 to 96 (ARYVVCWMFT…IEGPFEFGSF (95 aa)). Residues 9–12 (MFTI) carry the RCR-1 motif. The a divalent metal cation site is built by Glu33 and His41. An RCR-2 motif is present at residues 41 to 43 (HVQ). The Nuclear localization signal signature appears at 50–70 (RRSSLKQMRGFFPGAHLEKRK). The active-site For DNA cleavage activity is the Tyr79. The RCR-3 motif lies at 79 to 82 (YCMK). Residue Asp84 coordinates a divalent metal cation. The Nuclear localization signal motif lies at 96 to 102 (FKLSCND). 180-188 (GPNGGEGKT) is an ATP binding site.

Belongs to the nanoviridea/circoviridae replication-associated protein family. As to quaternary structure, homooligomer (Potential). Rep binds to repeated DNA motifs (iterons). Mg(2+) is required as a cofactor. It depends on Mn(2+) as a cofactor.

The protein resides in the host nucleus. It carries out the reaction ATP + H2O = ADP + phosphate + H(+). Essential for the replication of all genomic viral ssDNA (trans-replication). The closed circular ssDNA genome is first converted to a superhelical dsDNA. Rep binds a specific hairpin at the genome origin of replication. Introduces an endonucleolytic nick within the conserved sequence 5'-A[GT]TATTAC-3' in the intergenic region of the genome, thereby initiating the rolling circle replication (RCR). Following cleavage, binds covalently to the 5'-phosphate of DNA as a tyrosyl ester. The cleavage gives rise to a free 3'-OH that serves as a primer for the cellular DNA polymerase. The polymerase synthesizes the (+) strand DNA by rolling circle mechanism. After one round of replication, a Rep-catalyzed nucleotidyl transfer reaction releases a circular single-stranded virus genome, thereby terminating the replication. Displays origin-specific DNA cleavage, nucleotidyl transferase, ATPase and helicase activities. The sequence is that of Master replication protein (DNA-R) from Musa (BBTV).